We begin with the raw amino-acid sequence, 137 residues long: Large ribosomal subunit protein uL16 (137 aa).

It belongs to the universal ribosomal protein uL16 family. In terms of assembly, part of the 50S ribosomal subunit.

Functionally, binds 23S rRNA and is also seen to make contacts with the A and possibly P site tRNAs. This chain is Large ribosomal subunit protein uL16, found in Rhizobium johnstonii (strain DSM 114642 / LMG 32736 / 3841) (Rhizobium leguminosarum bv. viciae).